Here is a 274-residue protein sequence, read N- to C-terminus: Large ribosomal subunit protein uL2cz/uL2cy (274 aa).

The tract at residues 224–253 (NPIDHPHGGGEGRAPIGRKKPTTPWGYPAL) is disordered.

This sequence belongs to the universal ribosomal protein uL2 family. In terms of assembly, part of the 50S ribosomal subunit.

It localises to the plastid. The protein is Large ribosomal subunit protein uL2cz/uL2cy (rpl2-A) of Epifagus virginiana (Beechdrops).